A 254-amino-acid chain; its full sequence is 5'-nucleotidase SurE (254 aa).

4 residues coordinate a divalent metal cation: D8, D9, S40, and N93.

The protein belongs to the SurE nucleotidase family. The cofactor is a divalent metal cation.

It localises to the cytoplasm. It catalyses the reaction a ribonucleoside 5'-phosphate + H2O = a ribonucleoside + phosphate. Nucleotidase that shows phosphatase activity on nucleoside 5'-monophosphates. The protein is 5'-nucleotidase SurE of Actinobacillus pleuropneumoniae serotype 5b (strain L20).